Reading from the N-terminus, the 242-residue chain is 3-dehydroquinate dehydratase (242 aa).

Residues 39-41 (EIR) and Arg-73 each bind 3-dehydroquinate. His-135 (proton donor/acceptor) is an active-site residue. Lys-162 (schiff-base intermediate with substrate) is an active-site residue. The 3-dehydroquinate site is built by Arg-203 and Gln-228.

This sequence belongs to the type-I 3-dehydroquinase family. Homodimer.

It carries out the reaction 3-dehydroquinate = 3-dehydroshikimate + H2O. It functions in the pathway metabolic intermediate biosynthesis; chorismate biosynthesis; chorismate from D-erythrose 4-phosphate and phosphoenolpyruvate: step 3/7. In terms of biological role, involved in the third step of the chorismate pathway, which leads to the biosynthesis of aromatic amino acids. Catalyzes the cis-dehydration of 3-dehydroquinate (DHQ) and introduces the first double bond of the aromatic ring to yield 3-dehydroshikimate. The polypeptide is 3-dehydroquinate dehydratase (Methanosarcina mazei (strain ATCC BAA-159 / DSM 3647 / Goe1 / Go1 / JCM 11833 / OCM 88) (Methanosarcina frisia)).